Consider the following 464-residue polypeptide: Cysteine--tRNA ligase (464 aa).

Cys27 is a binding site for Zn(2+). Residues Pro29–Asn39 carry the 'HIGH' region motif. Residues Cys207, His232, and Glu236 each coordinate Zn(2+). The 'KMSKS' region motif lies at Lys264–Ser268. Lys267 serves as a coordination point for ATP.

Belongs to the class-I aminoacyl-tRNA synthetase family. Monomer. Zn(2+) is required as a cofactor.

The protein localises to the cytoplasm. The enzyme catalyses tRNA(Cys) + L-cysteine + ATP = L-cysteinyl-tRNA(Cys) + AMP + diphosphate. This chain is Cysteine--tRNA ligase, found in Alkaliphilus oremlandii (strain OhILAs) (Clostridium oremlandii (strain OhILAs)).